Reading from the N-terminus, the 171-residue chain is 3-hydroxydecanoyl-[acyl-carrier-protein] dehydratase (171 aa).

Residue His70 is part of the active site.

Belongs to the thioester dehydratase family. FabA subfamily. Homodimer.

It localises to the cytoplasm. The enzyme catalyses a (3R)-hydroxyacyl-[ACP] = a (2E)-enoyl-[ACP] + H2O. The catalysed reaction is (3R)-hydroxydecanoyl-[ACP] = (2E)-decenoyl-[ACP] + H2O. It catalyses the reaction (2E)-decenoyl-[ACP] = (3Z)-decenoyl-[ACP]. It participates in lipid metabolism; fatty acid biosynthesis. Its function is as follows. Necessary for the introduction of cis unsaturation into fatty acids. Catalyzes the dehydration of (3R)-3-hydroxydecanoyl-ACP to E-(2)-decenoyl-ACP and then its isomerization to Z-(3)-decenoyl-ACP. Can catalyze the dehydratase reaction for beta-hydroxyacyl-ACPs with saturated chain lengths up to 16:0, being most active on intermediate chain length. This Histophilus somni (strain 129Pt) (Haemophilus somnus) protein is 3-hydroxydecanoyl-[acyl-carrier-protein] dehydratase.